The primary structure comprises 672 residues: Acetoacetyl-CoA synthetase (672 aa).

This sequence belongs to the ATP-dependent AMP-binding enzyme family.

The protein localises to the cytoplasm. It localises to the cytosol. The catalysed reaction is acetoacetate + ATP + CoA = acetoacetyl-CoA + AMP + diphosphate. Converts acetoacetate to acetoacetyl-CoA in the cytosol. Ketone body-utilizing enzyme, responsible for the synthesis of cholesterol and fatty acids. This Macaca fascicularis (Crab-eating macaque) protein is Acetoacetyl-CoA synthetase (AACS).